We begin with the raw amino-acid sequence, 598 residues long: Nuclear receptor subfamily 4 group A member 2 (598 aa).

A disordered region spans residues M1 to Y22. Residues Y8–Y22 are compositionally biased toward low complexity. Residues E260–T335 constitute a DNA-binding region (nuclear receptor). 2 NR C4-type zinc fingers span residues C263–C283 and C299–C318. The short motif at F287–R314 is the Bipartite nuclear localization signal (NLS1) element. Residues S337–P361 form a disordered region. The Nuclear localization signal (NLS1) signature appears at L338–K350. Residues P352–P361 show a composition bias toward pro residues. The NR LBD domain occupies P360 to T595. Positions F443–A452 match the nuclear export sequence (NES1) motif. Residues Q568–K577 carry the nuclear export sequence (NES2) motif.

It belongs to the nuclear hormone receptor family. NR4 subfamily. In terms of assembly, interacts with SFPQ, NCOR2, SIN3A and HADC1. The interaction with NCOR2 increases in the absence of PITX3. Interacts with PER2.

It localises to the cytoplasm. The protein localises to the nucleus. Functionally, transcriptional regulator which is important for the differentiation and maintenance of meso-diencephalic dopaminergic (mdDA) neurons during development. It is crucial for expression of a set of genes such as SLC6A3, SLC18A2, TH and DRD2 which are essential for development of mdDA neurons. This Bos taurus (Bovine) protein is Nuclear receptor subfamily 4 group A member 2 (NR4A2).